The following is a 62-amino-acid chain: Metallothionein-4 (62 aa).

A divalent metal cation contacts are provided by cysteine 6, cysteine 8, cysteine 14, cysteine 16, cysteine 20, cysteine 22, cysteine 25, cysteine 27, cysteine 30, cysteine 34, cysteine 35, cysteine 37, cysteine 38, cysteine 42, cysteine 45, cysteine 49, cysteine 51, cysteine 58, cysteine 60, and cysteine 61.

The protein belongs to the metallothionein superfamily. Type 1 family. As to expression, expressed exclusively in stratified squamous epithelia associated with oral epithelia, esophagus, upper stomach, tail, footpads and neonatal skin.

Its function is as follows. Seems to bind zinc and copper. Could play a special role in regulating zinc metabolism during the differentiation of stratified epithelia. The polypeptide is Metallothionein-4 (Mt4) (Mus musculus (Mouse)).